We begin with the raw amino-acid sequence, 181 residues long: Glutamyl-tRNA(Gln) amidotransferase subunit C, chloroplastic/mitochondrial (181 aa).

The protein belongs to the GatC family. As to quaternary structure, subunit of the heterotrimeric GatCAB amidotransferase (AdT) complex, composed of A, B and C subunits.

It is found in the mitochondrion. The protein resides in the plastid. It localises to the chloroplast. It catalyses the reaction L-glutamyl-tRNA(Gln) + L-glutamine + ATP + H2O = L-glutaminyl-tRNA(Gln) + L-glutamate + ADP + phosphate + H(+). Allows the formation of correctly charged Gln-tRNA(Gln) through the transamidation of misacylated Glu-tRNA(Gln) in chloroplasts and mitochondria. The reaction takes place in the presence of glutamine and ATP through an activated gamma-phospho-Glu-tRNA(Gln). The polypeptide is Glutamyl-tRNA(Gln) amidotransferase subunit C, chloroplastic/mitochondrial (Picea sitchensis (Sitka spruce)).